Consider the following 803-residue polypeptide: Zinc finger protein 226 (803 aa).

The 71-residue stretch at 8-78 (VTFKDVAVAF…TTATRRQGNL (71 aa)) folds into the KRAB domain. The segment at 252-274 (YQCNECKKPFSDLSSFDLHQQLQ) adopts a C2H2-type 1; degenerate zinc-finger fold. A C2H2-type 2; degenerate zinc finger spans residues 280–302 (LTCVERGKGFCYSPVLPVHQKVH). C2H2-type zinc fingers lie at residues 307 to 329 (LKCD…QKVH), 335 to 357 (YKCK…CKVH), 363 to 385 (YNCE…QRLH), 391 to 413 (FKCD…QRVH), 419 to 441 (YKCE…QRVH), 447 to 469 (YKCE…QGVH), 475 to 497 (YICT…QRVH), 503 to 525 (YKCN…LVVH), 531 to 553 (YKCE…QKAH), 559 to 581 (FKCE…QLIH), 587 to 609 (YKCE…CRIH), 615 to 637 (YNCE…QRVH), 643 to 665 (FKCE…QKVH), 671 to 693 (YKCD…QRVH), 699 to 721 (YKCG…QSVH), 727 to 749 (YKCD…QRVH), and 755 to 777 (YKCE…HRIH). A disordered region spans residues 781–803 (KSYKSNRGGKNIRESTQEKKSIK). Over residues 791–803 (NIRESTQEKKSIK) the composition is skewed to basic and acidic residues.

Belongs to the krueppel C2H2-type zinc-finger protein family.

It is found in the nucleus. Functionally, may be involved in transcriptional regulation. This is Zinc finger protein 226 (ZNF226) from Homo sapiens (Human).